Reading from the N-terminus, the 571-residue chain is Proline--tRNA ligase (571 aa).

Belongs to the class-II aminoacyl-tRNA synthetase family. ProS type 1 subfamily. In terms of assembly, homodimer.

It localises to the cytoplasm. It catalyses the reaction tRNA(Pro) + L-proline + ATP = L-prolyl-tRNA(Pro) + AMP + diphosphate. Functionally, catalyzes the attachment of proline to tRNA(Pro) in a two-step reaction: proline is first activated by ATP to form Pro-AMP and then transferred to the acceptor end of tRNA(Pro). As ProRS can inadvertently accommodate and process non-cognate amino acids such as alanine and cysteine, to avoid such errors it has two additional distinct editing activities against alanine. One activity is designated as 'pretransfer' editing and involves the tRNA(Pro)-independent hydrolysis of activated Ala-AMP. The other activity is designated 'posttransfer' editing and involves deacylation of mischarged Ala-tRNA(Pro). The misacylated Cys-tRNA(Pro) is not edited by ProRS. This Photobacterium profundum (strain SS9) protein is Proline--tRNA ligase.